Consider the following 173-residue polypeptide: Crossover junction endodeoxyribonuclease RuvC (173 aa).

Active-site residues include aspartate 8, glutamate 67, and aspartate 139. Mg(2+)-binding residues include aspartate 8, glutamate 67, and aspartate 139.

Belongs to the RuvC family. Homodimer which binds Holliday junction (HJ) DNA. The HJ becomes 2-fold symmetrical on binding to RuvC with unstacked arms; it has a different conformation from HJ DNA in complex with RuvA. In the full resolvosome a probable DNA-RuvA(4)-RuvB(12)-RuvC(2) complex forms which resolves the HJ. It depends on Mg(2+) as a cofactor.

It localises to the cytoplasm. It catalyses the reaction Endonucleolytic cleavage at a junction such as a reciprocal single-stranded crossover between two homologous DNA duplexes (Holliday junction).. In terms of biological role, the RuvA-RuvB-RuvC complex processes Holliday junction (HJ) DNA during genetic recombination and DNA repair. Endonuclease that resolves HJ intermediates. Cleaves cruciform DNA by making single-stranded nicks across the HJ at symmetrical positions within the homologous arms, yielding a 5'-phosphate and a 3'-hydroxyl group; requires a central core of homology in the junction. The consensus cleavage sequence is 5'-(A/T)TT(C/G)-3'. Cleavage occurs on the 3'-side of the TT dinucleotide at the point of strand exchange. HJ branch migration catalyzed by RuvA-RuvB allows RuvC to scan DNA until it finds its consensus sequence, where it cleaves and resolves the cruciform DNA. The protein is Crossover junction endodeoxyribonuclease RuvC of Aeromonas salmonicida (strain A449).